The chain runs to 268 residues: 4-hydroxy-tetrahydrodipicolinate reductase (268 aa).

Residues 8–13 (GGGGKM) and E34 contribute to the NAD(+) site. NADP(+) is bound at residue K35. NAD(+) contacts are provided by residues 98 to 100 (GST) and 122 to 125 (APNM). Catalysis depends on H155, which acts as the Proton donor/acceptor. Position 156 (H156) interacts with (S)-2,3,4,5-tetrahydrodipicolinate. K159 (proton donor) is an active-site residue. A (S)-2,3,4,5-tetrahydrodipicolinate-binding site is contributed by 165–166 (GT).

Belongs to the DapB family.

It is found in the cytoplasm. It catalyses the reaction (S)-2,3,4,5-tetrahydrodipicolinate + NAD(+) + H2O = (2S,4S)-4-hydroxy-2,3,4,5-tetrahydrodipicolinate + NADH + H(+). It carries out the reaction (S)-2,3,4,5-tetrahydrodipicolinate + NADP(+) + H2O = (2S,4S)-4-hydroxy-2,3,4,5-tetrahydrodipicolinate + NADPH + H(+). It functions in the pathway amino-acid biosynthesis; L-lysine biosynthesis via DAP pathway; (S)-tetrahydrodipicolinate from L-aspartate: step 4/4. Its function is as follows. Catalyzes the conversion of 4-hydroxy-tetrahydrodipicolinate (HTPA) to tetrahydrodipicolinate. The sequence is that of 4-hydroxy-tetrahydrodipicolinate reductase from Syntrophus aciditrophicus (strain SB).